A 126-amino-acid polypeptide reads, in one-letter code: Small ribosomal subunit protein uS13 (126 aa).

Residues 92-126 are disordered; sequence RMGLPVRGQRTRTNARTRRGGRRTVAGKKKAPAKK. Basic residues predominate over residues 100–126; it reads QRTRTNARTRRGGRRTVAGKKKAPAKK.

The protein belongs to the universal ribosomal protein uS13 family. As to quaternary structure, part of the 30S ribosomal subunit. Forms a loose heterodimer with protein S19. Forms two bridges to the 50S subunit in the 70S ribosome.

Located at the top of the head of the 30S subunit, it contacts several helices of the 16S rRNA. In the 70S ribosome it contacts the 23S rRNA (bridge B1a) and protein L5 of the 50S subunit (bridge B1b), connecting the 2 subunits; these bridges are implicated in subunit movement. Contacts the tRNAs in the A and P-sites. This chain is Small ribosomal subunit protein uS13, found in Cyanothece sp. (strain PCC 7425 / ATCC 29141).